Here is a 232-residue protein sequence, read N- to C-terminus: Ribonuclease P protein component 3 (232 aa).

The protein belongs to the eukaryotic/archaeal RNase P protein component 3 family. Consists of a catalytic RNA component and at least 5 protein subunits.

The protein resides in the cytoplasm. The catalysed reaction is Endonucleolytic cleavage of RNA, removing 5'-extranucleotides from tRNA precursor.. Its function is as follows. Part of ribonuclease P, a protein complex that generates mature tRNA molecules by cleaving their 5'-ends. The polypeptide is Ribonuclease P protein component 3 (Methanococcus maripaludis (strain DSM 14266 / JCM 13030 / NBRC 101832 / S2 / LL)).